We begin with the raw amino-acid sequence, 492 residues long: uncharacterized protein (492 aa).

Belongs to the FGGY kinase family.

This is an uncharacterized protein from Escherichia coli (strain K12).